Consider the following 175-residue polypeptide: Probable chemoreceptor glutamine deamidase CheD (175 aa).

The protein belongs to the CheD family.

The catalysed reaction is L-glutaminyl-[protein] + H2O = L-glutamyl-[protein] + NH4(+). In terms of biological role, probably deamidates glutamine residues to glutamate on methyl-accepting chemotaxis receptors (MCPs), playing an important role in chemotaxis. The chain is Probable chemoreceptor glutamine deamidase CheD from Jannaschia sp. (strain CCS1).